The following is a 192-amino-acid chain: Leucine-rich repeat-containing protein 51 (192 aa).

LRR repeat units follow at residues 49–71 (SLTQ…NQVA), 80–101 (NLAW…LTTF), and 103–124 (NLSV…NKLA). In terms of domain architecture, LRRCT spans 137–175 (NPMEEEKGYRQYVLCTLPHITTFDFSGVTKADRTTAEVW).

The protein resides in the cytoplasm. The sequence is that of Leucine-rich repeat-containing protein 51 from Macaca mulatta (Rhesus macaque).